Reading from the N-terminus, the 573-residue chain is BICD family-like cargo adapter 1 (573 aa).

Residues 67 to 97 are disordered; that stretch reads ERPSDPGEHPQAEPGSLAEGAGPQPPPSQDP. Positions 68-77 are enriched in basic and acidic residues; sequence RPSDPGEHPQ. Positions 113–117 match the CC1 box motif; it reads AARLG. Positions 118–376 form a coiled coil; it reads KALLERNQDM…QLWEAYCQVR (259 aa). The segment at 386-412 is disordered; that stretch reads DSADSAVSTDSSMDESSETSSAKDVPA. Residues 387–396 show a composition bias toward low complexity; sequence SADSAVSTDS. Residues 440 to 525 adopt a coiled-coil conformation; sequence LSVEMTALKE…LEAWQDDMHR (86 aa).

Belongs to the BICDR family. In terms of assembly, part of a tripartite complex with dynein and dynactin, acts an adapter linking the dynein motor complex and dynactin. Interacts with KIF1C. Interacts with RAB6A and RAB6B; interaction is specific to Rab6.

Its subcellular location is the cytoplasm. The protein localises to the cytoskeleton. It localises to the microtubule organizing center. It is found in the centrosome. Functionally, acts as an adapter protein linking the dynein motor complex to various cargos and converts dynein from a non-processive to a highly processive motor in the presence of dynactin. Facilitates the interaction between dynein and dynactin and activates dynein processivity (the ability to move along a microtubule for a long distance without falling off the track). Predominantly recruits 2 dyneins, which increases both the force and speed of the microtubule motor. Component of secretory vesicle machinery in developing neurons that acts as a regulator of neurite outgrowth. Regulates the secretory vesicle transport by controlling the accumulation of Rab6-containing secretory vesicles in the pericentrosomal region restricting anterograde secretory transport during the early phase of neuronal differentiation, thereby inhibiting neuritogenesis. This is BICD family-like cargo adapter 1 (BICDL1) from Homo sapiens (Human).